Here is a 517-residue protein sequence, read N- to C-terminus: Crotonobetaine/carnitine--CoA ligase (517 aa).

It belongs to the ATP-dependent AMP-binding enzyme family.

The catalysed reaction is 4-(trimethylamino)butanoate + ATP + CoA = 4-(trimethylamino)butanoyl-CoA + AMP + diphosphate. It carries out the reaction crotonobetaine + ATP + CoA = crotonobetainyl-CoA + AMP + diphosphate. The enzyme catalyses (R)-carnitine + ATP + CoA = (R)-carnitinyl-CoA + AMP + diphosphate. It participates in amine and polyamine metabolism; carnitine metabolism. Catalyzes the transfer of CoA to carnitine, generating the initial carnitinyl-CoA needed for the CaiB reaction cycle. Also has activity toward crotonobetaine and gamma-butyrobetaine. In Salmonella typhi, this protein is Crotonobetaine/carnitine--CoA ligase.